Reading from the N-terminus, the 71-residue chain is UPF0352 protein Swoo_2786 (71 aa).

This sequence belongs to the UPF0352 family.

This is UPF0352 protein Swoo_2786 from Shewanella woodyi (strain ATCC 51908 / MS32).